Here is a 349-residue protein sequence, read N- to C-terminus: uncharacterized protein (349 aa).

This is an uncharacterized protein from Archaeoglobus fulgidus (strain ATCC 49558 / DSM 4304 / JCM 9628 / NBRC 100126 / VC-16).